Reading from the N-terminus, the 278-residue chain is Digeranylgeranylglyceryl phosphate synthase (278 aa).

Helical transmembrane passes span 12 to 32 (LKNC…ASNF), 34 to 54 (FGAL…CGFG), 92 to 112 (IMIF…MAVL), 129 to 149 (IIGN…GGIA), 199 to 219 (IYIS…PYLT), 221 to 241 (IFGI…LAGF), and 257 to 277 (SKNI…GSIF).

Belongs to the UbiA prenyltransferase family. DGGGP synthase subfamily. The cofactor is Mg(2+).

It localises to the cell membrane. It catalyses the reaction sn-3-O-(geranylgeranyl)glycerol 1-phosphate + (2E,6E,10E)-geranylgeranyl diphosphate = 2,3-bis-O-(geranylgeranyl)-sn-glycerol 1-phosphate + diphosphate. Its pathway is membrane lipid metabolism; glycerophospholipid metabolism. In terms of biological role, prenyltransferase that catalyzes the transfer of the geranylgeranyl moiety of geranylgeranyl diphosphate (GGPP) to the C2 hydroxyl of (S)-3-O-geranylgeranylglyceryl phosphate (GGGP). This reaction is the second ether-bond-formation step in the biosynthesis of archaeal membrane lipids. In Methanococcus vannielii (strain ATCC 35089 / DSM 1224 / JCM 13029 / OCM 148 / SB), this protein is Digeranylgeranylglyceryl phosphate synthase.